A 202-amino-acid polypeptide reads, in one-letter code: ATP-dependent Clp protease proteolytic subunit 3 (202 aa).

Residue serine 93 is the Nucleophile of the active site. The active site involves histidine 118.

This sequence belongs to the peptidase S14 family. As to quaternary structure, fourteen ClpP subunits assemble into 2 heptameric rings which stack back to back to give a disk-like structure with a central cavity, resembling the structure of eukaryotic proteasomes.

It localises to the cytoplasm. The catalysed reaction is Hydrolysis of proteins to small peptides in the presence of ATP and magnesium. alpha-casein is the usual test substrate. In the absence of ATP, only oligopeptides shorter than five residues are hydrolyzed (such as succinyl-Leu-Tyr-|-NHMec, and Leu-Tyr-Leu-|-Tyr-Trp, in which cleavage of the -Tyr-|-Leu- and -Tyr-|-Trp bonds also occurs).. Cleaves peptides in various proteins in a process that requires ATP hydrolysis. Has a chymotrypsin-like activity. Plays a major role in the degradation of misfolded proteins. The chain is ATP-dependent Clp protease proteolytic subunit 3 from Rhodococcus jostii (strain RHA1).